Consider the following 243-residue polypeptide: Pyridoxine 5'-phosphate synthase (243 aa).

Residue Asn-9 coordinates 3-amino-2-oxopropyl phosphate. 11–12 is a 1-deoxy-D-xylulose 5-phosphate binding site; that stretch reads DH. Arg-20 is a 3-amino-2-oxopropyl phosphate binding site. His-45 acts as the Proton acceptor in catalysis. 1-deoxy-D-xylulose 5-phosphate contacts are provided by Arg-47 and His-52. Glu-72 serves as the catalytic Proton acceptor. Thr-102 contacts 1-deoxy-D-xylulose 5-phosphate. The Proton donor role is filled by His-193. 3-amino-2-oxopropyl phosphate contacts are provided by residues Gly-194 and 215–216; that span reads GH.

This sequence belongs to the PNP synthase family. As to quaternary structure, homooctamer; tetramer of dimers.

Its subcellular location is the cytoplasm. The catalysed reaction is 3-amino-2-oxopropyl phosphate + 1-deoxy-D-xylulose 5-phosphate = pyridoxine 5'-phosphate + phosphate + 2 H2O + H(+). It functions in the pathway cofactor biosynthesis; pyridoxine 5'-phosphate biosynthesis; pyridoxine 5'-phosphate from D-erythrose 4-phosphate: step 5/5. In terms of biological role, catalyzes the complicated ring closure reaction between the two acyclic compounds 1-deoxy-D-xylulose-5-phosphate (DXP) and 3-amino-2-oxopropyl phosphate (1-amino-acetone-3-phosphate or AAP) to form pyridoxine 5'-phosphate (PNP) and inorganic phosphate. This Escherichia coli O157:H7 protein is Pyridoxine 5'-phosphate synthase.